The following is a 506-amino-acid chain: Maturase K (506 aa).

This sequence belongs to the intron maturase 2 family. MatK subfamily.

It localises to the plastid. Its subcellular location is the chloroplast. Its function is as follows. Usually encoded in the trnK tRNA gene intron. Probably assists in splicing its own and other chloroplast group II introns. This chain is Maturase K, found in Trifolium lupinaster (Lupine clover).